The chain runs to 168 residues: Lipoprotein signal peptidase (168 aa).

Helical transmembrane passes span 5–25 (SPYALLVVAAIALDQWIKHLV), 37–57 (LVPFLALFRTYNTGIAFSMFS), 59–79 (FGDTGLVVIAVLVVAFVLYLA), and 85–105 (GHVIARTGFALIIGGALGNLI). Catalysis depends on residues Asp-115 and Asp-133. Residues 125–145 (SFAIFNLADAFISVGAALVVF) traverse the membrane as a helical segment.

Belongs to the peptidase A8 family.

It localises to the cell inner membrane. The enzyme catalyses Release of signal peptides from bacterial membrane prolipoproteins. Hydrolyzes -Xaa-Yaa-Zaa-|-(S,diacylglyceryl)Cys-, in which Xaa is hydrophobic (preferably Leu), and Yaa (Ala or Ser) and Zaa (Gly or Ala) have small, neutral side chains.. It functions in the pathway protein modification; lipoprotein biosynthesis (signal peptide cleavage). Its function is as follows. This protein specifically catalyzes the removal of signal peptides from prolipoproteins. This Mesorhizobium japonicum (strain LMG 29417 / CECT 9101 / MAFF 303099) (Mesorhizobium loti (strain MAFF 303099)) protein is Lipoprotein signal peptidase.